Here is a 331-residue protein sequence, read N- to C-terminus: Adenosine deaminase (331 aa).

Residues histidine 12 and histidine 14 each coordinate Zn(2+). Substrate contacts are provided by histidine 14 and aspartate 16. Histidine 197 contacts Zn(2+). Glutamate 200 acts as the Proton donor in catalysis. Zn(2+) is bound at residue aspartate 278.

This sequence belongs to the metallo-dependent hydrolases superfamily. Adenosine and AMP deaminases family. Adenosine deaminase subfamily. It depends on Zn(2+) as a cofactor.

The enzyme catalyses adenosine + H2O + H(+) = inosine + NH4(+). It carries out the reaction 2'-deoxyadenosine + H2O + H(+) = 2'-deoxyinosine + NH4(+). Its function is as follows. Catalyzes the hydrolytic deamination of adenosine and 2-deoxyadenosine. This Shewanella halifaxensis (strain HAW-EB4) protein is Adenosine deaminase.